The following is a 122-amino-acid chain: Large ribosomal subunit protein uL14 (122 aa).

The protein belongs to the universal ribosomal protein uL14 family. In terms of assembly, part of the 50S ribosomal subunit. Forms a cluster with proteins L3 and L19. In the 70S ribosome, L14 and L19 interact and together make contacts with the 16S rRNA in bridges B5 and B8.

Functionally, binds to 23S rRNA. Forms part of two intersubunit bridges in the 70S ribosome. The protein is Large ribosomal subunit protein uL14 of Psychrobacter arcticus (strain DSM 17307 / VKM B-2377 / 273-4).